The following is a 143-amino-acid chain: Large ribosomal subunit protein uL16 (143 aa).

Belongs to the universal ribosomal protein uL16 family. Part of the 50S ribosomal subunit.

Binds 23S rRNA and is also seen to make contacts with the A and possibly P site tRNAs. The sequence is that of Large ribosomal subunit protein uL16 from Oenococcus oeni (strain ATCC BAA-331 / PSU-1).